The sequence spans 570 residues: Protein mom-5 (570 aa).

A signal peptide spans 1–16; sequence MHRHILILFLFGCLSA. Over 17 to 230 the chain is Extracellular; the sequence is DQRLSSTSIS…FDGRVRRILR (214 aa). Positions 32 to 148 constitute an FZ domain; that stretch reads STTRKCEHIT…FPVTDLCVGK (117 aa). Cystine bridges form between Cys37/Cys98, Cys45/Cys91, Cys82/Cys119, Cys108/Cys145, and Cys112/Cys136. The N-linked (GlcNAc...) asparagine glycan is linked to Asn51. A glycan (N-linked (GlcNAc...) asparagine) is linked at Asn149. A helical membrane pass occupies residues 231-251; sequence IWTAAWSVACFVCSLFTLVTF. The Cytoplasmic segment spans residues 252–264; the sequence is LVDLSRFAYPVRP. The chain crosses the membrane as a helical span at residues 265-285; it reads ILYLAFCYLAISTVYMIGVVG. The Extracellular portion of the chain corresponds to 286–319; that stretch reads EDGFACGTYGSTPTTLVTQGGENVGCSALAVVHY. A helical transmembrane segment spans residues 320 to 340; that stretch reads FFFMSSCAWWLVLCLAWFLAA. The Cytoplasmic portion of the chain corresponds to 341–348; the sequence is NLKWGAES. A helical transmembrane segment spans residues 349-369; that stretch reads IAALSPYFHAMCWGVPAVLSV. The Extracellular portion of the chain corresponds to 370-395; the sequence is TVLVTNSVDGDVFTGICSVGNLNPSA. Residues 396-416 form a helical membrane-spanning segment; the sequence is LVYFFFTPIVVSLALGAVLLV. The Cytoplasmic segment spans residues 417 to 449; that stretch reads CGIWSMIRIRSYIKLQHADVERNISKLEKLMLR. Residues 450–470 traverse the membrane as a helical segment; it reads IGAFAIMYSLPTAMNAAIMWY. Residues 471–515 lie on the Extracellular side of the membrane; that stretch reads QAVNMPAWLEGWLHHRCVRLQDRELFGFTYPVDDCPMDPKVAAPE. The chain crosses the membrane as a helical span at residues 516–536; sequence IIVFLLKYVSQLVVGITCAIW. Residues 537–570 are Cytoplasmic-facing; sequence VVSSKTLSSYHKAYLALSSRSPTVPAHVDQVNMR.

The protein belongs to the G-protein coupled receptor Fz/Smo family.

Its subcellular location is the cell membrane. The protein resides in the early endosome. Its function is as follows. Receptor for Wnt proteins. Most frizzled receptors are coupled to the beta-catenin canonical signaling pathway, which leads to the activation of disheveled proteins, inhibition of gsk-3 kinase, nuclear accumulation of beta-catenin and activation of Wnt target genes. A second signaling pathway involving PKC and calcium fluxes has been seen for some family members, but it is not yet clear if it represents a distinct pathway or if it can be integrated in the canonical pathway, as pkc seems to be required for Wnt-mediated inactivation of gsk-3 kinase. Both pathways seem to involve interactions with G-proteins. Required in embryonic development for the correct positioning and orientation of the mitotic spindles and division planes in blastomere cells. During early embryonic cell divisions, directs the asymmetric positioning of transcription factors such as pop-1 and dsh-2 in daughter cells in order to determine cell fate specification. Acts redundantly with other Wnt receptors such as lin-17 to control vulval precursor cell specification and also the polarity of different cell types including distal tip cells, seam cells, AVG interneurons and P-cells and their descendants. Plays a role in the migration of cell types including distal tip cells and the QR neuroblast descendants, QR.p and QR.pa during larval development. Negatively regulates the unc-6/Netrin receptors unc-5 and unc-40 to control distal tip cell polarity and migration. Acts through ced-5/DOCK180 and ced-10/Rac to control both distal tip cell migration and the phagocytic clearance of apoptotic cell corpses. Furthermore, it is also required for the migration and axon guidance of the different neuronal cell types including CAN, ALM, HSN and the two mechanosensory neurons AVM and PVM. Mediates Wnt receptor cfz-2 in directing ALM migration, but may also act redundantly with the Wnt receptors cfz-2 and mig-1 to direct the migration of other neuronal cell types including CAN and HSN. Mediates Wnt ligand egl-20 in the control of the anterior-posterior axon guidance of AVM and PVM neurons. This is Protein mom-5 from Caenorhabditis elegans.